Here is a 631-residue protein sequence, read N- to C-terminus: Chaperone protein HtpG (631 aa).

The tract at residues 1–339 (MSTNQETRGF…SNDLPLNVSR (339 aa)) is a; substrate-binding. Residues 340-555 (EILQDNKVTS…DDQMTTQMAK (216 aa)) are b. Positions 556–631 (LFAAAGQAMP…NTLLSKLTSH (76 aa)) are c.

This sequence belongs to the heat shock protein 90 family. As to quaternary structure, homodimer.

The protein resides in the cytoplasm. In terms of biological role, molecular chaperone. Has ATPase activity. This Pasteurella multocida (strain Pm70) protein is Chaperone protein HtpG.